The following is a 426-amino-acid chain: Tyrosine--tRNA ligase (426 aa).

An L-tyrosine-binding site is contributed by tyrosine 38. The 'HIGH' region motif lies at 43 to 52 (PTADSLHIGS). Residues tyrosine 176 and glutamine 180 each coordinate L-tyrosine. The 'KMSKS' region signature appears at 236–240 (KFGKT). Lysine 239 contributes to the ATP binding site. One can recognise an S4 RNA-binding domain in the interval 359–426 (QTIVEVLTQS…KKLFNLYIWK (68 aa)).

Belongs to the class-I aminoacyl-tRNA synthetase family. TyrS type 1 subfamily. Homodimer.

Its subcellular location is the cytoplasm. It carries out the reaction tRNA(Tyr) + L-tyrosine + ATP = L-tyrosyl-tRNA(Tyr) + AMP + diphosphate + H(+). Functionally, catalyzes the attachment of tyrosine to tRNA(Tyr) in a two-step reaction: tyrosine is first activated by ATP to form Tyr-AMP and then transferred to the acceptor end of tRNA(Tyr). The sequence is that of Tyrosine--tRNA ligase from Aliivibrio fischeri (strain ATCC 700601 / ES114) (Vibrio fischeri).